The sequence spans 805 residues: Leucine--tRNA ligase (805 aa).

A 'HIGH' region motif is present at residues 40 to 51 (PYPSGAGLHVGH). The short motif at 576 to 580 (KMSKS) is the 'KMSKS' region element. Lysine 579 contributes to the ATP binding site.

It belongs to the class-I aminoacyl-tRNA synthetase family.

It localises to the cytoplasm. It catalyses the reaction tRNA(Leu) + L-leucine + ATP = L-leucyl-tRNA(Leu) + AMP + diphosphate. The sequence is that of Leucine--tRNA ligase from Geobacillus thermodenitrificans (strain NG80-2).